We begin with the raw amino-acid sequence, 319 residues long: ATP-dependent 6-phosphofructokinase (319 aa).

Residue G11 participates in ATP binding. 21 to 25 (RAVVR) contacts ADP. Residues 72–73 (RC) and 102–105 (GDGS) contribute to the ATP site. D103 provides a ligand contact to Mg(2+). Position 125–127 (125–127 (TID)) interacts with substrate. The active-site Proton acceptor is the D127. R154 contributes to the ADP binding site. Residues R162 and 169-171 (MGR) each bind substrate. ADP-binding positions include 185–187 (GAE), K211, and 213–215 (KMH). Substrate contacts are provided by residues E222, R243, and 249–252 (HIQR).

The protein belongs to the phosphofructokinase type A (PFKA) family. ATP-dependent PFK group I subfamily. Prokaryotic clade 'B1' sub-subfamily. As to quaternary structure, homotetramer. Mg(2+) serves as cofactor.

It localises to the cytoplasm. The catalysed reaction is beta-D-fructose 6-phosphate + ATP = beta-D-fructose 1,6-bisphosphate + ADP + H(+). Its pathway is carbohydrate degradation; glycolysis; D-glyceraldehyde 3-phosphate and glycerone phosphate from D-glucose: step 3/4. With respect to regulation, allosterically activated by ADP and other diphosphonucleosides, and allosterically inhibited by phosphoenolpyruvate. In terms of biological role, catalyzes the phosphorylation of D-fructose 6-phosphate to fructose 1,6-bisphosphate by ATP, the first committing step of glycolysis. This is ATP-dependent 6-phosphofructokinase from Clostridium botulinum (strain ATCC 19397 / Type A).